We begin with the raw amino-acid sequence, 435 residues long: Thiosulfate sulfurtransferase YnjE (435 aa).

Positions Met1–Ala23 are cleaved as a signal peptide. Rhodanese domains follow at residues Gln36–Lys138, Pro164–Arg270, and His304–Ala425. Cys385 serves as the catalytic Cysteine persulfide intermediate. Arg390 contributes to the substrate binding site.

As to quaternary structure, monomer.

Its subcellular location is the periplasm. The enzyme catalyses thiosulfate + hydrogen cyanide = thiocyanate + sulfite + 2 H(+). The protein is Thiosulfate sulfurtransferase YnjE (ynjE) of Escherichia coli (strain K12).